A 674-amino-acid chain; its full sequence is Protein asunder (674 aa).

A coiled-coil region spans residues 516 to 538 (HKAKDQYRLLYRELEQLIQLNAS). Residues 601 to 607 (LKASKRR) carry the Nuclear localization signal (NLS) motif.

It belongs to the Integrator subunit 13 family. In terms of assembly, belongs to the multiprotein complex Integrator, at least composed of IntS1, IntS2, IntS3, IntS4, omd/IntS5, IntS6, defl/IntS7, IntS8, IntS9, IntS10, IntS11, IntS12, asun/IntS13, IntS14 and IntS15. The core complex associates with protein phosphatase 2A subunits mts/PP2A and Pp2A-29B, to form the Integrator-PP2A (INTAC) complex. In terms of processing, phosphorylated.

It localises to the nucleus. It is found in the cytoplasm. The protein localises to the perinuclear region. Its function is as follows. Component of the integrator complex, a multiprotein complex that terminates RNA polymerase II (Pol II) transcription in the promoter-proximal region of genes. The integrator complex provides a quality checkpoint during transcription elongation by driving premature transcription termination of transcripts that are unfavorably configured for transcriptional elongation: the complex terminates transcription by (1) catalyzing dephosphorylation of the C-terminal domain (CTD) of Pol II subunit Polr2A/Rbp1 and Spt5, and (2) degrading the exiting nascent RNA transcript via endonuclease activity. The integrator complex is also involved in the 3'-end processing of the U7 snRNA, and also the spliceosomal snRNAs U1, U2, U4 and U5. This chain is Protein asunder (asun), found in Drosophila persimilis (Fruit fly).